A 181-amino-acid polypeptide reads, in one-letter code: Type II secretion system protein H (181 aa).

A propeptide spans 1–5 (leader sequence); the sequence is MRQRG. Position 6 is an N-methylphenylalanine (F6). Residues 6-29 traverse the membrane as a helical segment; the sequence is FTLLEIMLVVLLAGVAATLVMMAI.

Belongs to the GSP H family. In terms of assembly, type II secretion is composed of four main components: the outer membrane complex, the inner membrane complex, the cytoplasmic secretion ATPase and the periplasm-spanning pseudopilus. Interacts with core component OutG. Post-translationally, cleaved by prepilin peptidase. In terms of processing, methylated by prepilin peptidase at the amino group of the N-terminal phenylalanine once the leader sequence is cleaved by prepilin peptidase.

The protein localises to the cell inner membrane. Its function is as follows. Component of the type II secretion system required for the energy-dependent secretion of extracellular factors such as proteases and toxins from the periplasm. Part of the pseudopilus tip complex that is critical for the recognition and binding of secretion substrates. The sequence is that of Type II secretion system protein H (outH) from Dickeya chrysanthemi (Pectobacterium chrysanthemi).